Consider the following 192-residue polypeptide: Succinate dehydrogenase cytochrome b560 subunit, mitochondrial (192 aa).

A mitochondrion-targeting transit peptide spans 1-27 (MFGRTLNTFTSRNAPLVRNFDKFIVNN). Topologically, residues 48–83 (YSTQAKKPFTITEKRIDELKTPYQPTSPHLTIYKFP) are mitochondrial matrix. Residues 84-113 (LPAVMSIMHRATGICLALGITGLAGVTLFA) form a helical membrane-spanning segment. The Mitochondrial intermembrane portion of the chain corresponds to 114 to 131 (PHDAIHYIQLLHTQYPAL). Residues 132 to 156 (VYPAKFAVALPLTYHFCTGVRHIIW) form a helical membrane-spanning segment. Residue histidine 146 coordinates heme b. Over 157–164 (DETVKGLS) the chain is Mitochondrial matrix. The chain crosses the membrane as a helical span at residues 165 to 186 (ISQIESSGKVLLAVVAVLSTIF). Residues 187 to 189 (TFV) lie on the Mitochondrial intermembrane side of the membrane.

Belongs to the cytochrome b560 family. As to quaternary structure, component of complex II composed of four subunits: the flavoprotein (FP) sdha, iron-sulfur protein (IP) sdhb, and a cytochrome b560 composed of sdhc and sdhd. Heme b serves as cofactor.

It localises to the mitochondrion inner membrane. It functions in the pathway carbohydrate metabolism; tricarboxylic acid cycle. In terms of biological role, membrane-anchoring subunit of succinate dehydrogenase (SDH) that is involved in complex II of the mitochondrial electron transport chain and is responsible for transferring electrons from succinate to ubiquinone (coenzyme Q). The protein is Succinate dehydrogenase cytochrome b560 subunit, mitochondrial (sdhC) of Dictyostelium discoideum (Social amoeba).